The primary structure comprises 142 residues: gSG7 salivary protein (142 aa).

Positions 1 to 26 (MAVRMTVILPLAMALICLMQAEPATA) are cleaved as a signal peptide. Disulfide bonds link Cys84–Cys139 and Cys107–Cys117.

Associates with activated host C3-convertase complex C3bBb (C3-CFB). Interacts with host properdin (CFP), a regulator of the alternate pathway of complement. As to expression, female salivary gland (at protein level).

Its subcellular location is the secreted. Its function is as follows. Salivary protein that potently inhibits the alternative pathway of complement system activation in the host while having no inhibitory effect on the classical or lectin pathways. Binds and stabilizes activated host C3-convertase complex C3bBb (C3-CFB) and inhibits its convertase activity. Enhances accumulation of C3bBb on immobilized properdin. The protein is gSG7 salivary protein of Anopheles albimanus (New world malaria mosquito).